Consider the following 138-residue polypeptide: MPNIFKILLIVLLAVVSFRLSASTGDKKTANDGSGNNSSAGIGTKIKRIVTAGLLFTSLATGGAEAIGRSNAQGGNAAGLVPSHVTNRSMAPPPPPVQFEMGANRLEKMRAHLRELAEKMPVNESKRLSPSGPDPHHH.

The N-terminal stretch at 1-22 (MPNIFKILLIVLLAVVSFRLSA) is a signal peptide. The tract at residues 23 to 90 (STGDKKTAND…VPSHVTNRSM (68 aa)) is required for secretion from the host cytoplasm to the host apoplasm. N-linked (GlcNAc...) asparagine glycans are attached at residues asparagine 37, asparagine 87, and asparagine 123. Disordered regions lie at residues 66 to 97 (AIGR…PPPV) and 116 to 138 (LAEK…PHHH). A CLE motif is present at residues 127–138 (RLSPSGPDPHHH).

It belongs to the CLV3/ESR signal peptide family. Highly expressed exclusively within the dorsal esophageal gland cell during syncytium formation in host plants (at protein level).

The protein localises to the secreted. It localises to the host cytoplasm. It is found in the host extracellular space. Its subcellular location is the extracellular space. The protein resides in the apoplast. In terms of biological role, mimics host plant CLE extracellular signal peptides that regulate cell fate. May play a role in the differentiation or division of feeding cells (syncytia) induced in plant roots during infection. The polypeptide is CLAVATA3/ESR (CLE)-related protein 2 (CLE2) (Heterodera glycines (Soybean cyst nematode worm)).